A 315-amino-acid polypeptide reads, in one-letter code: Tyrosine recombinase XerC (315 aa).

One can recognise a Core-binding (CB) domain in the interval 14–105 (PDLLNERQSW…GLRSLLHHLQ (92 aa)). Residues 126 to 309 (SLPKPLTDRQ…DTARLLEIYD (184 aa)) form the Tyr recombinase domain. Residues arginine 169, lysine 193, histidine 261, arginine 264, and histidine 287 contribute to the active site. Tyrosine 296 functions as the O-(3'-phospho-DNA)-tyrosine intermediate in the catalytic mechanism.

It belongs to the 'phage' integrase family. XerC subfamily. As to quaternary structure, forms a cyclic heterotetrameric complex composed of two molecules of XerC and two molecules of XerD.

Its subcellular location is the cytoplasm. Functionally, site-specific tyrosine recombinase, which acts by catalyzing the cutting and rejoining of the recombining DNA molecules. The XerC-XerD complex is essential to convert dimers of the bacterial chromosome into monomers to permit their segregation at cell division. It also contributes to the segregational stability of plasmids. The protein is Tyrosine recombinase XerC of Agrobacterium fabrum (strain C58 / ATCC 33970) (Agrobacterium tumefaciens (strain C58)).